Reading from the N-terminus, the 925-residue chain is Isoleucine--tRNA ligase (925 aa).

A 'HIGH' region motif is present at residues 57–67; sequence PYANGDIHMGH. L-isoleucyl-5'-AMP is bound at residue Glu-556. A 'KMSKS' region motif is present at residues 597–601; it reads KMSKS. An ATP-binding site is contributed by Lys-600. Zn(2+) contacts are provided by Cys-890, Cys-893, Cys-910, and Cys-913.

It belongs to the class-I aminoacyl-tRNA synthetase family. IleS type 1 subfamily. As to quaternary structure, monomer. Zn(2+) is required as a cofactor.

It is found in the cytoplasm. The catalysed reaction is tRNA(Ile) + L-isoleucine + ATP = L-isoleucyl-tRNA(Ile) + AMP + diphosphate. In terms of biological role, catalyzes the attachment of isoleucine to tRNA(Ile). As IleRS can inadvertently accommodate and process structurally similar amino acids such as valine, to avoid such errors it has two additional distinct tRNA(Ile)-dependent editing activities. One activity is designated as 'pretransfer' editing and involves the hydrolysis of activated Val-AMP. The other activity is designated 'posttransfer' editing and involves deacylation of mischarged Val-tRNA(Ile). In Carboxydothermus hydrogenoformans (strain ATCC BAA-161 / DSM 6008 / Z-2901), this protein is Isoleucine--tRNA ligase.